The following is a 371-amino-acid chain: ATP-dependent protease ATP-binding subunit-like protein AmiB (371 aa).

An ATP-binding site is contributed by G96–T103.

Belongs to the ClpX chaperone family. Mg(2+) is required as a cofactor.

In terms of biological role, unlikely to encode a regulatory protein. Has ATPase activity. AmiB and AmiS may act jointly into a two component ABC transporter system. The polypeptide is ATP-dependent protease ATP-binding subunit-like protein AmiB (amiB) (Pseudomonas aeruginosa (strain ATCC 15692 / DSM 22644 / CIP 104116 / JCM 14847 / LMG 12228 / 1C / PRS 101 / PAO1)).